A 475-amino-acid chain; its full sequence is Ribulose bisphosphate carboxylase large chain (475 aa).

Positions 1–2 (MS) are excised as a propeptide. The residue at position 3 (Pro3) is an N-acetylproline. Residue Lys14 is modified to N6,N6,N6-trimethyllysine. Residues Asn123 and Thr173 each contribute to the substrate site. Lys175 (proton acceptor) is an active-site residue. Lys177 contacts substrate. 3 residues coordinate Mg(2+): Lys201, Asp203, and Glu204. Lys201 is modified (N6-carboxylysine). His294 functions as the Proton acceptor in the catalytic mechanism. Residues Arg295, His327, and Ser379 each coordinate substrate.

The protein belongs to the RuBisCO large chain family. Type I subfamily. As to quaternary structure, heterohexadecamer of 8 large chains and 8 small chains; disulfide-linked. The disulfide link is formed within the large subunit homodimers. It depends on Mg(2+) as a cofactor. The disulfide bond which can form in the large chain dimeric partners within the hexadecamer appears to be associated with oxidative stress and protein turnover.

Its subcellular location is the plastid. It localises to the chloroplast. The catalysed reaction is 2 (2R)-3-phosphoglycerate + 2 H(+) = D-ribulose 1,5-bisphosphate + CO2 + H2O. The enzyme catalyses D-ribulose 1,5-bisphosphate + O2 = 2-phosphoglycolate + (2R)-3-phosphoglycerate + 2 H(+). RuBisCO catalyzes two reactions: the carboxylation of D-ribulose 1,5-bisphosphate, the primary event in carbon dioxide fixation, as well as the oxidative fragmentation of the pentose substrate in the photorespiration process. Both reactions occur simultaneously and in competition at the same active site. The sequence is that of Ribulose bisphosphate carboxylase large chain from Calycanthus floridus var. glaucus (Eastern sweetshrub).